The primary structure comprises 424 residues: S-adenosylmethionine synthase (424 aa).

Histidine 16 contributes to the ATP binding site. A Mg(2+)-binding site is contributed by aspartate 18. Glutamate 44 is a K(+) binding site. Positions 57 and 100 each coordinate L-methionine. Residues 100 to 110 form a flexible loop region; sequence QSPDIAQGVNT. Residues 175–177, 251–252, aspartate 260, 266–267, alanine 283, and lysine 287 each bind ATP; these read DGK, KF, and RK. Aspartate 260 is a binding site for L-methionine. L-methionine is bound at residue lysine 291.

This sequence belongs to the AdoMet synthase family. As to quaternary structure, homotetramer; dimer of dimers. The cofactor is Mg(2+). K(+) serves as cofactor.

Its subcellular location is the cytoplasm. The catalysed reaction is L-methionine + ATP + H2O = S-adenosyl-L-methionine + phosphate + diphosphate. It functions in the pathway amino-acid biosynthesis; S-adenosyl-L-methionine biosynthesis; S-adenosyl-L-methionine from L-methionine: step 1/1. Its function is as follows. Catalyzes the formation of S-adenosylmethionine (AdoMet) from methionine and ATP. The overall synthetic reaction is composed of two sequential steps, AdoMet formation and the subsequent tripolyphosphate hydrolysis which occurs prior to release of AdoMet from the enzyme. The protein is S-adenosylmethionine synthase of Nostoc punctiforme (strain ATCC 29133 / PCC 73102).